We begin with the raw amino-acid sequence, 317 residues long: Ribosomal protein L11 methyltransferase (317 aa).

S-adenosyl-L-methionine contacts are provided by T158, G179, D201, and N244.

The protein belongs to the methyltransferase superfamily. PrmA family.

It is found in the cytoplasm. It catalyses the reaction L-lysyl-[protein] + 3 S-adenosyl-L-methionine = N(6),N(6),N(6)-trimethyl-L-lysyl-[protein] + 3 S-adenosyl-L-homocysteine + 3 H(+). Its function is as follows. Methylates ribosomal protein L11. This chain is Ribosomal protein L11 methyltransferase, found in Streptococcus thermophilus (strain CNRZ 1066).